The primary structure comprises 355 residues: Aminopeptidase N (355 aa).

Residues E156 and G290 to N294 contribute to the substrate site. H326 is a binding site for Zn(2+). The active-site Proton acceptor is the E327. Zn(2+) is bound by residues H330 and E349. Substrate is bound at residue E349.

Belongs to the peptidase M1 family. Zn(2+) serves as cofactor.

The protein localises to the cytoplasm. The enzyme catalyses Release of an N-terminal amino acid, Xaa-|-Yaa- from a peptide, amide or arylamide. Xaa is preferably Ala, but may be most amino acids including Pro (slow action). When a terminal hydrophobic residue is followed by a prolyl residue, the two may be released as an intact Xaa-Pro dipeptide.. Aminopeptidase N is involved in the degradation of intracellular peptides generated by protein breakdown during normal growth as well as in response to nutrient starvation. This is Aminopeptidase N (pepN) from Acetobacter pasteurianus (Acetobacter turbidans).